A 308-amino-acid chain; its full sequence is HPr kinase/phosphorylase (308 aa).

Residues His-136 and Lys-157 contribute to the active site. 151–158 (GESGIGKS) is an ATP binding site. Position 158 (Ser-158) interacts with Mg(2+). Asp-175 (proton acceptor; for phosphorylation activity. Proton donor; for dephosphorylation activity) is an active-site residue. Residues 198–207 (IEVRGMGIID) form an important for the catalytic mechanism of both phosphorylation and dephosphorylation region. Glu-199 lines the Mg(2+) pocket. Residue Arg-240 is part of the active site. Positions 261–266 (PIRPGR) are important for the catalytic mechanism of dephosphorylation.

It belongs to the HPrK/P family. As to quaternary structure, homohexamer. Mg(2+) is required as a cofactor.

The enzyme catalyses [HPr protein]-L-serine + ATP = [HPr protein]-O-phospho-L-serine + ADP + H(+). It carries out the reaction [HPr protein]-O-phospho-L-serine + phosphate + H(+) = [HPr protein]-L-serine + diphosphate. In terms of biological role, catalyzes the ATP- as well as the pyrophosphate-dependent phosphorylation of a specific serine residue in HPr, a phosphocarrier protein of the phosphoenolpyruvate-dependent sugar phosphotransferase system (PTS). HprK/P also catalyzes the pyrophosphate-producing, inorganic phosphate-dependent dephosphorylation (phosphorolysis) of seryl-phosphorylated HPr (P-Ser-HPr). The two antagonistic activities of HprK/P are regulated by several intracellular metabolites, which change their concentration in response to the absence or presence of rapidly metabolisable carbon sources (glucose, fructose, etc.) in the growth medium. Therefore, by controlling the phosphorylation state of HPr, HPrK/P is a sensor enzyme that plays a major role in the regulation of carbon metabolism and sugar transport: it mediates carbon catabolite repression (CCR), and regulates PTS-catalyzed carbohydrate uptake and inducer exclusion. This chain is HPr kinase/phosphorylase, found in Clostridium kluyveri (strain NBRC 12016).